The following is a 1412-amino-acid chain: MNTKVSRQYAKISENSIQKISLALATPEDVLEWSRGEVHRPETINYKTFKPERGGLFDELIFGPLVDYKCSVCGRKYRKSNENQLCIATKECKIRGSRILSKMARRYSMGHIALNAPILHFWFFKIDHSIIAKLLGLKVFEGNSKVPTTITKTAIENLIYYKSHIVLETGGLKSLEQNKIIDISEAGLIYKNALIEIIEFYPPGSEEHNALAESISELADVTSSKIGREYGVDYYELNEIIEEFSSARIATGALAIEYLLDKIDLRAEKAAVEAELAGVQKQIYKNKKIILKNQKRDKLYKRLQVINAFINSGQDPKMMIIRNLPVIPADLRPLVQLDGSRHSTSDCNELYRRIIIRNNRLKRWKAAHAPVIIIQNEMRMLQEAVDALIDNQKKSTNQVTTKEGRPLKSISDALTGKKGRFRQNLLGKRVDYSGRSVIVVGPKLKMHQAGLPRKMAAVLFEPWIIRNLIQEKKVGSIKMARKMIEEENPIIWPHVAKVIQNKPIILNRAPTLHRLSIQAFEPVLVRAKAIQLHPLVTAGFNADFDGDQMAVHIPISPEAIRETQELMFADKNILGPKDGEPIVNPSQDMVLGLYYLSQEKAGAKGEGSFFSTYEAMLKAYEFRSVELHARVVLPFEQVKPFIAKTMRGHLISTVGKFILNNIFPANFPFIFDDNVDELELNYPSQIKKYVLPYGTNFREYIQNLKVNEPLNKKAIAKIVRQIFDTYDGLLAKEDIATVIDQLDFGNYQNCVLLYEKLRDYKKQKLPVPHLSKLSEFTIFEYSQLYKQLQQNGPVESYRVLEDHEKAELLEKIWFKYNNMVCSILDKIKDLGFHYSTLSGTSIAISDIKMAPKKHEFIKEGENYINKLNTFYAKGLITDDERYVLAIAKWTQIKNDIQEDLNQSIKDDNQNSLVMMMKSGARGNISNFVQLAGMRGLMANNVKALKVDAENERVVRSIVEVPVKSSFLEGLTSFEFYSSTHGARKGLTDTALNTAKSGYLTRRLVDVAQNIVVVAEDCFSDFGFVVKDIIDTKTNTIIVPLLERIEGRFLNKDVYDSRGIKLASAGTMVDLQTAKKIVAAGIKKVEIRSILSCHIKNSVCKKCYGKDLATNRLVSIGEAVGIIAAQSIGEPGTQLTMRTFHTGGVANVEDITGGFTRLIELIDSHEHPWGKPAKISPYYGIITKISDLAEKNAANKGFLITIEYKTSKNEKAEHIIRIEQSQKLRVKVGDKVIPGQKLVEGPIILKELLAVSDARTLQNYLLKEIQRIYRMQGISISDKYIEIIIRQMLSKVQIIENGDSNFFIGSIVDISDYQEVNGQLISQNKNPAFGNVIVKGAKQIPLLSNSFLAAASYQETSKILVHSVISSQIDKLEGLKENIIVGHKIPAGTNSNYEPKSKFDIRNPLSFFMKNNR.

Residues D543, D545, and D547 each contribute to the Mg(2+) site. Zn(2+) is bound by residues C1017, C1092, C1099, and C1102.

Belongs to the RNA polymerase beta' chain family. As to quaternary structure, the RNAP catalytic core consists of 2 alpha, 1 beta, 1 beta' and 1 omega subunit. When a sigma factor is associated with the core the holoenzyme is formed, which can initiate transcription. Mg(2+) is required as a cofactor. Zn(2+) serves as cofactor.

The enzyme catalyses RNA(n) + a ribonucleoside 5'-triphosphate = RNA(n+1) + diphosphate. Its function is as follows. DNA-dependent RNA polymerase catalyzes the transcription of DNA into RNA using the four ribonucleoside triphosphates as substrates. This chain is DNA-directed RNA polymerase subunit beta', found in Mesomycoplasma hyopneumoniae (strain 7448) (Mycoplasma hyopneumoniae).